The primary structure comprises 451 residues: MREIVHIQIGQCGNQIGAKFWEMIGEEHGIDLAGSDRGASALQLERISVYYNEAYGRKYVPRAVLVDLEPGTMDSIRSSKLGALFQPDSFVHGNSGAGNNWAKGHYTEGAELIENVLEVVRHESESCDCLQGFQIVHSLGGGTGSGMGTLLMNKIREEYPDRIMNSFSVMPSPKVSDTVVEPYNAVLSIHQLIENADACFCIDNEALYDICFRTLKLTTPTYGDLNHLVSLTMSGITTSLRFPGQLNADLRKLAVNMVPFPRLHFFMPGFAPLTAQGSQQYRALSVAELTQQMFDARNTMAACDLRRGRYLTVACIFRGKMSTKEVDQQLLSVQTRNSSCFVEWIPNNVKVAVCDIPPRGLSMAATFIGNNTAIQEIFNRVSEHFSAMFKRKAFVHWYTSEGMDINEFGEAENNIHDLVSEYQQFQDAKAVLEEDEEVTEEAEMEPEDKGH.

Residues 1–4 carry the MREI motif motif; it reads MREI. GTP is bound by residues Gln11, Glu69, Ser138, Gly142, Thr143, and Gly144. Mg(2+) is bound at residue Glu69. Ser172 bears the Phosphoserine; by CDK1 mark. The GTP site is built by Asn204 and Asn226. A disordered region spans residues 432-451; that stretch reads LEEDEEVTEEAEMEPEDKGH. Acidic residues predominate over residues 433–451; that stretch reads EEDEEVTEEAEMEPEDKGH. Position 440 is a 5-glutamyl polyglutamate (Glu440).

Belongs to the tubulin family. Dimer of alpha and beta chains. A typical microtubule is a hollow water-filled tube with an outer diameter of 25 nm and an inner diameter of 15 nM. Alpha-beta heterodimers associate head-to-tail to form protofilaments running lengthwise along the microtubule wall with the beta-tubulin subunit facing the microtubule plus end conferring a structural polarity. Microtubules usually have 13 protofilaments but different protofilament numbers can be found in some organisms and specialized cells. Interacts with RANBP10. The cofactor is Mg(2+). Post-translationally, some glutamate residues at the C-terminus are polyglutamylated, resulting in polyglutamate chains on the gamma-carboxyl group. Polyglutamylation plays a key role in microtubule severing by spastin (SPAST). SPAST preferentially recognizes and acts on microtubules decorated with short polyglutamate tails: severing activity by SPAST increases as the number of glutamates per tubulin rises from one to eight, but decreases beyond this glutamylation threshold. Glutamylation is also involved in cilia motility. In terms of processing, some glutamate residues at the C-terminus are monoglycylated but not polyglycylated due to the absence of functional TTLL10 in human. Monoglycylation is mainly limited to tubulin incorporated into cilia and flagella axonemes, which is required for their stability and maintenance. Flagella glycylation controls sperm motility. Both polyglutamylation and monoglycylation can coexist on the same protein on adjacent residues, and lowering glycylation levels increases polyglutamylation, and reciprocally. Phosphorylated on Ser-172 by CDK1 during the cell cycle, from metaphase to telophase, but not in interphase. This phosphorylation inhibits tubulin incorporation into microtubules. Hematopoietic cell-specific. Major isotype in leukocytes, where it represents 50% of all beta-tubulins.

The protein resides in the cytoplasm. It localises to the cytoskeleton. Its function is as follows. Tubulin is the major constituent of microtubules, a cylinder consisting of laterally associated linear protofilaments composed of alpha- and beta-tubulin heterodimers. Microtubules grow by the addition of GTP-tubulin dimers to the microtubule end, where a stabilizing cap forms. Below the cap, tubulin dimers are in GDP-bound state, owing to GTPase activity of alpha-tubulin. In Homo sapiens (Human), this protein is Tubulin beta-1 chain (TUBB1).